Consider the following 357-residue polypeptide: Fulicin peptides (357 aa).

Residues 1-17 (MQPTVLLILMTSCLTYQ) form the signal peptide. Residues 18-119 (VIADKPKGNH…VDGSQGHLEP (102 aa)) constitute a propeptide that is removed on maturation. Residue asparagine 123 is modified to D-asparagine. At valine 126 the chain carries Valine amide. A propeptide spanning residues 130–194 (NTLPEEAGSF…YNTMNEDEAS (65 aa)) is cleaved from the precursor. Residues valine 201 and valine 209 each carry the valine amide modification. Leucine 217 and leucine 226 each carry leucine amide. 2 positions are modified to isoleucine amide: isoleucine 233 and isoleucine 242. Residues valine 250 and valine 259 each carry the valine amide modification. Residues 263–298 (NQGVFTVSPSSTKISFDDNYLPYLSSVDAGDLSDVN) constitute a propeptide that is removed on maturation. Leucine 305 is subject to Leucine amide. Residues 311–357 (TAEQDETSQRSNERLVALLQNTGFRKRLSRMLQNQRLVEHYPEFIGK) constitute a propeptide that is removed on maturation.

Found in central ganglia and the ventricles and atria of the heart.

Potentiates tetanic contraction of the penis retractor muscle at very low concentrations, and also shows modulatory actions on the activity of the buccal and ventricular muscles and the central ganglionic neurons. The protein is Fulicin peptides of Lissachatina fulica (Giant African land snail).